The sequence spans 216 residues: Peroxiredoxin (216 aa).

The Thioredoxin domain maps to valine 2–isoleucine 158. Cysteine 46 functions as the Cysteine sulfenic acid (-SOH) intermediate in the catalytic mechanism. A substrate-binding site is contributed by arginine 121. A disulfide bridge links cysteine 205 with cysteine 211.

The protein belongs to the peroxiredoxin family. Prx6 subfamily. As to quaternary structure, homodecamer. Pentamer of dimers that assemble into a ring structure.

The protein resides in the cytoplasm. It catalyses the reaction a hydroperoxide + [thioredoxin]-dithiol = an alcohol + [thioredoxin]-disulfide + H2O. In terms of biological role, thiol-specific peroxidase that catalyzes the reduction of hydrogen peroxide and organic hydroperoxides to water and alcohols, respectively. Plays a role in cell protection against oxidative stress by detoxifying peroxides. The chain is Peroxiredoxin (ahpC) from Pyrococcus horikoshii (strain ATCC 700860 / DSM 12428 / JCM 9974 / NBRC 100139 / OT-3).